A 429-amino-acid polypeptide reads, in one-letter code: Transcription factor IIIA (429 aa).

A disordered region spans residues 1-45 (MGGEVLNNEGMPLAELKQETIPISRSESSESLNSLTSTRSSSSNR). The segment covering 24–44 (SRSESSESLNSLTSTRSSSSN) has biased composition (low complexity). 9 consecutive C2H2-type zinc fingers follow at residues 49–74 (YFCD…LSVH), 80–102 (FQCD…LYTH), 108–130 (FQCS…EVTH), 134–159 (FICP…LSVH), 163–186 (LTCP…SKHH), 194–219 (YQCT…KNDH), 222–244 (LKCP…MIIH), 253–277 (WKCH…GSIH), and 365–389 (YRCF…IDKH). Residues 406-416 (KTLVDQNHKEP) are compositionally biased toward basic and acidic residues. Residues 406 to 429 (KTLVDQNHKEPFIIQKETQSAGDK) form a disordered region.

It localises to the nucleus. Functionally, interacts with the internal control region (ICR) of approximately 50 bases within the 5S RNA genes, is required for correct transcription of these genes by RNA polymerase III. Also binds the transcribed 5S RNA's. This is Transcription factor IIIA (PZF1) from Saccharomyces cerevisiae (strain ATCC 204508 / S288c) (Baker's yeast).